Consider the following 365-residue polypeptide: DNA replication and repair protein RecF (365 aa).

30–37 provides a ligand contact to ATP; it reads GPNGSGKT.

Belongs to the RecF family.

Its subcellular location is the cytoplasm. In terms of biological role, the RecF protein is involved in DNA metabolism; it is required for DNA replication and normal SOS inducibility. RecF binds preferentially to single-stranded, linear DNA. It also seems to bind ATP. The polypeptide is DNA replication and repair protein RecF (Azotobacter vinelandii (strain DJ / ATCC BAA-1303)).